A 590-amino-acid polypeptide reads, in one-letter code: Zinc finger protein 703 (590 aa).

The span at 1 to 14 (MSDSPAGSNPRTPE) shows a compositional bias: polar residues. Disordered stretches follow at residues 1 to 43 (MSDS…DPLR), 96 to 293 (CSQI…AGHV), and 341 to 366 (LVGG…LTGA). An N-acetylserine modification is found at Ser2. Composition is skewed to low complexity over residues 27 to 37 (PAVPAAVSLLP), 128 to 139 (RSAPGAASAAAA), 171 to 189 (GSSS…PGDK), and 207 to 219 (APVS…SSPG). Basic and acidic residues predominate over residues 241 to 251 (ELDKKDQEPKP). Ser252 carries the post-translational modification Phosphoserine. Composition is skewed to gly residues over residues 260 to 273 (RGGG…GGAE) and 341 to 352 (LVGGQLSGGLGL). The C2H2-type zinc finger occupies 456 to 484 (HSCNWVAASGPCDKRFATSEELLSHLRTH). Arg580 carries the post-translational modification Omega-N-methylarginine.

Belongs to the Elbow/Noc family. In terms of assembly, interacts with TLE4; increases transcriptional repression. Interacts with DCAF7 and PHB2. May interact with HSPD1. As to expression, expressed in mammary epithelium.

The protein localises to the nucleus. It is found in the cytoplasm. In terms of biological role, transcriptional corepressor which does not bind directly to DNA and may regulate transcription through recruitment of histone deacetylases to gene promoters. Regulates cell adhesion, migration and proliferation. May be required for segmental gene expression during hindbrain development. The sequence is that of Zinc finger protein 703 (ZNF703) from Homo sapiens (Human).